The chain runs to 266 residues: NAD kinase 1 (266 aa).

The active-site Proton acceptor is the Asp-45. NAD(+) is bound by residues 45–46 (DG), 122–123 (NE), and Arg-148. Position 150 (Asp-150) interacts with ATP. NAD(+) is bound by residues Ser-158 and 161–166 (TAYNKA).

The protein belongs to the NAD kinase family. In terms of assembly, homodimer. Requires Ca(2+) as cofactor. Mn(2+) is required as a cofactor.

It is found in the cytoplasm. It carries out the reaction NAD(+) + ATP = ADP + NADP(+) + H(+). Its activity is regulated as follows. Allosterically inhibited by NADP and activated by quinolinic acid. Strongly inhibited by HgCl(2). Involved in the regulation of the intracellular balance of NAD and NADP, and is a key enzyme in the biosynthesis of NADP. Catalyzes specifically the phosphorylation on 2'-hydroxyl of the adenosine moiety of NAD to yield NADP. It can use ATP and other nucleoside triphosphates (GTP, UTP) as well as inorganic polyphosphate (poly(P)) as a source of phosphorus. The chain is NAD kinase 1 (ppnKA) from Bacillus subtilis (strain 168).